Reading from the N-terminus, the 194-residue chain is Serine/threonine-protein kinase mos (194 aa).

The Protein kinase domain occupies 47–194 (LCLLNLLGSG…HLDLKPANIF (148 aa)). ATP is bound by residues 53-61 (LGSGGFGSV) and Lys74. Asp187 acts as the Proton acceptor in catalysis.

This sequence belongs to the protein kinase superfamily. Ser/Thr protein kinase family.

The enzyme catalyses L-seryl-[protein] + ATP = O-phospho-L-seryl-[protein] + ADP + H(+). It carries out the reaction L-threonyl-[protein] + ATP = O-phospho-L-threonyl-[protein] + ADP + H(+). This Dendroaspis angusticeps (Eastern green mamba) protein is Serine/threonine-protein kinase mos (MOS).